The sequence spans 164 residues: Nucleotide-binding protein Helmi_22490 (164 aa).

Belongs to the YajQ family.

Its function is as follows. Nucleotide-binding protein. This Heliobacterium modesticaldum (strain ATCC 51547 / Ice1) protein is Nucleotide-binding protein Helmi_22490.